Here is a 444-residue protein sequence, read N- to C-terminus: L-ornithine N(5)-monooxygenase (444 aa).

Residues 40-48 (ERQPAFGWH) and glutamine 59 each bind FAD. Lysine 64 contacts substrate. Valine 125 is an FAD binding site. NADP(+) contacts are provided by residues 211-214 (AGQS) and arginine 236. Substrate contacts are provided by residues 250-253 (NEIF) and asparagine 280. 280–282 (NYA) serves as a coordination point for NADP(+). Position 408–410 (408–410 (RCC)) interacts with FAD. The segment covering 420-432 (SARRSKTGSRPRT) has biased composition (basic residues). The interval 420-444 (SARRSKTGSRPRTMKAWPGPRTKND) is disordered.

It belongs to the lysine N(6)-hydroxylase/L-ornithine N(5)-oxygenase family. Requires FAD as cofactor.

It catalyses the reaction L-ornithine + NADPH + O2 = N(5)-hydroxy-L-ornithine + NADP(+) + H2O. The protein operates within siderophore biosynthesis; ornibactin biosynthesis. Catalyzes the conversion of L-ornithine to N(5)-hydroxyornithine, the first step in the biosynthesis of all hydroxamate-containing siderophores, such as ornibactin. This Burkholderia cepacia (Pseudomonas cepacia) protein is L-ornithine N(5)-monooxygenase.